Reading from the N-terminus, the 235-residue chain is MSAIVEDMYLLSSSMKMEKQFRKRHHSDSSDDDSSSPKSASPSMDDDRRAHHNELERRRRDHIKDHFTILKDAIPLLDGEKSSRALILKRAVEFIHVMQTKLSSQGKAIEDLTRKNELLEERLLERESSGSPSSSRLPALAVSSSQMQLTMPIIPQMQNIAQLSQYPQQANIIAQSTNPAQLDGLIALNNDAILALLGSFQSVSPSLLDSAPGTPPSGFYPCAFSPVDQQMAVKI.

The disordered stretch occupies residues 18-49 (EKQFRKRHHSDSSDDDSSSPKSASPSMDDDRR). The segment at 47–60 (DRRAHHNELERRRR) is basic motif. In terms of domain architecture, bHLH spans 47 to 98 (DRRAHHNELERRRRDHIKDHFTILKDAIPLLDGEKSSRALILKRAVEFIHVM). A helix-loop-helix motif region spans residues 61-98 (DHIKDHFTILKDAIPLLDGEKSSRALILKRAVEFIHVM).

This sequence belongs to the MAX family. As to quaternary structure, may form homodimer. Interacts (via N-terminus) with skn-1 isoforms a and c. As to expression, expressed in the intestine and in the AWC sensory neurons.

The protein resides in the nucleus. Its subcellular location is the cytoplasm. Transcription factor which regulates the expression of genes involved in lipid metabolism in response to nutrient availability. Binds to the E-box motif 5'-CACGTG-3'. Under well-fed conditions, binds to the promoter and represses the expression of lipase genes lipl-1, lipl-2, lipl-3 and to a lesser extent lipl-5, thereby preventing lipolysis. In response to a high-glucose diet, promotes fatty acid synthesis, elongation and desaturation by up-regulating transcription factor sbp-1 expression. Under well-fed conditions, acts remotely in the intestine to up-regulate the expression of chemoreceptor srh-234 gene in the ADL sensory neuron, possibly by regulating the insulin signaling pathway. This is Protein mxl-3 from Caenorhabditis elegans.